The primary structure comprises 466 residues: Delta-1 crystallin (466 aa).

Belongs to the lyase 1 family. Argininosuccinate lyase subfamily. In terms of assembly, homotetramer. Eye lens.

Functionally, delta crystallin, the principal crystallin in embryonic lens, is found only in birds and reptiles. The protein is Delta-1 crystallin (ASL1) of Meleagris gallopavo (Wild turkey).